The primary structure comprises 393 residues: Pyrin and HIN domain-containing protein 1-like (393 aa).

A Pyrin domain is found at Met-1 to Lys-87. A disordered region spans residues Lys-82–Leu-188. Residues Lys-87 to Arg-102 show a composition bias toward basic residues. 2 stretches are compositionally biased toward polar residues: residues Pro-108–Asn-118 and Gly-126–Ile-151. Residues Ser-152–Thr-169 are compositionally biased toward low complexity. A compositionally biased stretch (polar residues) spans Leu-170–Arg-186. The HIN-200 domain occupies Asn-219 to Leu-393.

Belongs to the HIN-200 family.

Its subcellular location is the nucleus. The polypeptide is Pyrin and HIN domain-containing protein 1-like (Mus musculus (Mouse)).